The sequence spans 465 residues: UDP-N-acetylmuramate--L-alanine ligase (465 aa).

112–118 (GTHGKTT) serves as a coordination point for ATP.

It belongs to the MurCDEF family.

The protein resides in the cytoplasm. The catalysed reaction is UDP-N-acetyl-alpha-D-muramate + L-alanine + ATP = UDP-N-acetyl-alpha-D-muramoyl-L-alanine + ADP + phosphate + H(+). It participates in cell wall biogenesis; peptidoglycan biosynthesis. Cell wall formation. The chain is UDP-N-acetylmuramate--L-alanine ligase from Burkholderia cenocepacia (strain HI2424).